A 252-amino-acid chain; its full sequence is MPAVVNIAAYKFVVLDNLPTLRADVLAQAGAVNLKGTVLLAEEGINLFLAGSRDKIDTFLQWLRADSRLADLEAKFSLSETVPFRRLRVKIKREIIRMDHPAIQPQSGRAPAVSPATLARWLEQGVDDQGRPVVMLDTRNAFEVDAGTFEGAVDWRIERFTQFPAAVQAHRDSLRGKTVVSFCTGGIRCEKAALYMAESGVEHVYQLDGGILKYFEETGGKGFNGNCFVFDERVALDPALAPAGAVAQLATA.

The 95-residue stretch at 129–223 (QGRPVVMLDT…YFEETGGKGF (95 aa)) folds into the Rhodanese domain. The active-site Cysteine persulfide intermediate is the C183.

The protein belongs to the TrhO family.

The enzyme catalyses uridine(34) in tRNA + AH2 + O2 = 5-hydroxyuridine(34) in tRNA + A + H2O. In terms of biological role, catalyzes oxygen-dependent 5-hydroxyuridine (ho5U) modification at position 34 in tRNAs. This Bordetella petrii (strain ATCC BAA-461 / DSM 12804 / CCUG 43448) protein is tRNA uridine(34) hydroxylase.